The chain runs to 442 residues: Lipoyl synthase, apicoplast (442 aa).

The N-terminal stretch at 1–23 (MRVLTPSLYIYAFFIFCVRFKCG) is a signal peptide. Residues 104 to 154 (LGEHQLKGKRKESATNVEKEKKEKEQQEERLPVPKVGNKMPEKKPDWFHVP) are disordered. Residues 114–135 (KESATNVEKEKKEKEQQEERLP) are compositionally biased toward basic and acidic residues. [4Fe-4S] cluster-binding residues include Cys177, Cys182, Cys188, Cys203, Cys207, Cys210, and Ser418. The Radical SAM core domain occupies 189–407 (WNIGTATIML…KEEGMKMGFK (219 aa)).

The protein belongs to the radical SAM superfamily. Lipoyl synthase family. The cofactor is [4Fe-4S] cluster.

It is found in the plastid. It localises to the apicoplast. The catalysed reaction is [[Fe-S] cluster scaffold protein carrying a second [4Fe-4S](2+) cluster] + N(6)-octanoyl-L-lysyl-[protein] + 2 oxidized [2Fe-2S]-[ferredoxin] + 2 S-adenosyl-L-methionine + 4 H(+) = [[Fe-S] cluster scaffold protein] + N(6)-[(R)-dihydrolipoyl]-L-lysyl-[protein] + 4 Fe(3+) + 2 hydrogen sulfide + 2 5'-deoxyadenosine + 2 L-methionine + 2 reduced [2Fe-2S]-[ferredoxin]. It functions in the pathway protein modification; protein lipoylation via endogenous pathway; protein N(6)-(lipoyl)lysine from octanoyl-[acyl-carrier-protein]: step 2/2. In terms of biological role, catalyzes the radical-mediated insertion of two sulfur atoms into the C-6 and C-8 positions of the octanoyl moiety bound to the lipoyl domains of lipoate-dependent enzymes, thereby converting the octanoylated domains into lipoylated derivatives. The chain is Lipoyl synthase, apicoplast from Plasmodium knowlesi (strain H).